We begin with the raw amino-acid sequence, 173 residues long: Small ribosomal subunit protein uS5 (173 aa).

Residues 18 to 81 (LREKMIAVNR…EQARRGMFKV (64 aa)) enclose the S5 DRBM domain.

It belongs to the universal ribosomal protein uS5 family. Part of the 30S ribosomal subunit. Contacts proteins S4 and S8.

In terms of biological role, with S4 and S12 plays an important role in translational accuracy. Its function is as follows. Located at the back of the 30S subunit body where it stabilizes the conformation of the head with respect to the body. This is Small ribosomal subunit protein uS5 from Bordetella avium (strain 197N).